Here is a 209-residue protein sequence, read N- to C-terminus: Ribosome maturation factor RimP (209 aa).

Belongs to the RimP family.

Its subcellular location is the cytoplasm. In terms of biological role, required for maturation of 30S ribosomal subunits. The sequence is that of Ribosome maturation factor RimP from Bartonella bacilliformis (strain ATCC 35685 / KC583 / Herrer 020/F12,63).